Here is a 180-residue protein sequence, read N- to C-terminus: Large ribosomal subunit protein uL10 (180 aa).

It belongs to the universal ribosomal protein uL10 family. As to quaternary structure, part of the ribosomal stalk of the 50S ribosomal subunit. The N-terminus interacts with L11 and the large rRNA to form the base of the stalk. The C-terminus forms an elongated spine to which L12 dimers bind in a sequential fashion forming a multimeric L10(L12)X complex.

Its function is as follows. Forms part of the ribosomal stalk, playing a central role in the interaction of the ribosome with GTP-bound translation factors. In Treponema pallidum (strain Nichols), this protein is Large ribosomal subunit protein uL10 (rplJ).